Reading from the N-terminus, the 64-residue chain is Large ribosomal subunit protein bL33 (64 aa).

Belongs to the bacterial ribosomal protein bL33 family.

This Crocosphaera subtropica (strain ATCC 51142 / BH68) (Cyanothece sp. (strain ATCC 51142)) protein is Large ribosomal subunit protein bL33.